The following is a 117-amino-acid chain: Large ribosomal subunit protein bL20 (117 aa).

Belongs to the bacterial ribosomal protein bL20 family.

In terms of biological role, binds directly to 23S ribosomal RNA and is necessary for the in vitro assembly process of the 50S ribosomal subunit. It is not involved in the protein synthesizing functions of that subunit. In Aliivibrio salmonicida (strain LFI1238) (Vibrio salmonicida (strain LFI1238)), this protein is Large ribosomal subunit protein bL20.